Here is a 440-residue protein sequence, read N- to C-terminus: Streptokinase G (440 aa).

Positions 1 to 26 are cleaved as a signal peptide; that stretch reads MKNYLSFGMFALLFALTFGTVNSVQA.

In terms of biological role, this protein is not a protease, but it activates plasminogen by complexing with it. As a potential virulence factor, it is thought to prevent the formation of effective fibrin barriers around the site of infection, thereby contributing to the invasiveness of the cells. This chain is Streptokinase G (skg), found in Streptococcus sp. (strain 19909).